A 180-amino-acid chain; its full sequence is Peptide deformylase (180 aa).

Fe cation is bound by residues Cys-88 and His-130. Glu-131 is a catalytic residue. His-134 provides a ligand contact to Fe cation.

It belongs to the polypeptide deformylase family. Fe(2+) is required as a cofactor.

The enzyme catalyses N-terminal N-formyl-L-methionyl-[peptide] + H2O = N-terminal L-methionyl-[peptide] + formate. In terms of biological role, removes the formyl group from the N-terminal Met of newly synthesized proteins. Requires at least a dipeptide for an efficient rate of reaction. N-terminal L-methionine is a prerequisite for activity but the enzyme has broad specificity at other positions. This chain is Peptide deformylase, found in Acidothermus cellulolyticus (strain ATCC 43068 / DSM 8971 / 11B).